The following is a 436-amino-acid chain: tRNA pseudouridine synthase Pus10 (436 aa).

The active-site Nucleophile is the aspartate 254. Substrate-binding residues include tyrosine 322 and tyrosine 394.

This sequence belongs to the pseudouridine synthase Pus10 family.

The catalysed reaction is uridine(54) in tRNA = pseudouridine(54) in tRNA. It carries out the reaction uridine(55) in tRNA = pseudouridine(55) in tRNA. Functionally, responsible for synthesis of pseudouridine from uracil-54 and uracil-55 in the psi GC loop of transfer RNAs. This is tRNA pseudouridine synthase Pus10 from Methanopyrus kandleri (strain AV19 / DSM 6324 / JCM 9639 / NBRC 100938).